Consider the following 459-residue polypeptide: MTCDVSPLFGTDGIRGRANFEPMTVETSVLLGKAVAGVLLERHSGKHRVVVGKDTRLSGYMFENALIAGLTSMGIETLMLGPIPTPGVAFITRAYRADAGIMISASHNPYRDNGIKIFSSDGFKIGQAVEERIEAMIASKSFGGLPEDHAVGKNKRVKDAMGRYIEYAKATFPKGRTLKGLRIVLDCAHGAAYRVAPSVFEELDAEVICYGCEPSGCNINEGCGALWPSIIQKAVIEHEADVGIALDGDGDRLIMVDEKGHIVDGDMLLSICASDLKRRQALPENRVVATVMTNFGVLRYLESLGIQVTISPVGDRHVLQHMLETKAILGGEQSGHMIFLDYNTTGDGIVSALQVLRIMIESESTLSDLTACIVKSPQSLINVPVAKKVPLDSLSNVQVVLQEVKEILGDSGRILLRYSGTENICRVMVEGTKKHQVDSLAKTIVDVVEAEIGGAEISE.

The active-site Phosphoserine intermediate is the S106. Positions 106, 247, 249, and 251 each coordinate Mg(2+). Position 106 is a phosphoserine (S106).

Belongs to the phosphohexose mutase family. It depends on Mg(2+) as a cofactor. In terms of processing, activated by phosphorylation.

The catalysed reaction is alpha-D-glucosamine 1-phosphate = D-glucosamine 6-phosphate. Catalyzes the conversion of glucosamine-6-phosphate to glucosamine-1-phosphate. The polypeptide is Phosphoglucosamine mutase (Chlamydia muridarum (strain MoPn / Nigg)).